The sequence spans 255 residues: Small ribosomal subunit protein eS1 (255 aa).

Ala2 carries the post-translational modification N-acetylalanine; partial.

It belongs to the eukaryotic ribosomal protein eS1 family. In terms of assembly, component of the small ribosomal subunit. Mature ribosomes consist of a small (40S) and a large (60S) subunit. The 40S subunit contains about 33 different proteins and 1 molecule of RNA (18S). The 60S subunit contains about 49 different proteins and 3 molecules of RNA (25S, 5.8S and 5S).

The protein resides in the cytoplasm. This chain is Small ribosomal subunit protein eS1, found in Candida glabrata (strain ATCC 2001 / BCRC 20586 / JCM 3761 / NBRC 0622 / NRRL Y-65 / CBS 138) (Yeast).